The following is a 487-amino-acid chain: N-succinylglutamate 5-semialdehyde dehydrogenase (487 aa).

An NAD(+)-binding site is contributed by 221 to 226 (GSSRTG). Catalysis depends on residues glutamate 244 and cysteine 278.

This sequence belongs to the aldehyde dehydrogenase family. AstD subfamily.

The catalysed reaction is N-succinyl-L-glutamate 5-semialdehyde + NAD(+) + H2O = N-succinyl-L-glutamate + NADH + 2 H(+). It functions in the pathway amino-acid degradation; L-arginine degradation via AST pathway; L-glutamate and succinate from L-arginine: step 4/5. Catalyzes the NAD-dependent reduction of succinylglutamate semialdehyde into succinylglutamate. The chain is N-succinylglutamate 5-semialdehyde dehydrogenase from Pseudomonas putida (strain ATCC 47054 / DSM 6125 / CFBP 8728 / NCIMB 11950 / KT2440).